We begin with the raw amino-acid sequence, 192 residues long: Elongation factor P (192 aa).

Belongs to the elongation factor P family.

It is found in the cytoplasm. Its pathway is protein biosynthesis; polypeptide chain elongation. Involved in peptide bond synthesis. Stimulates efficient translation and peptide-bond synthesis on native or reconstituted 70S ribosomes in vitro. Probably functions indirectly by altering the affinity of the ribosome for aminoacyl-tRNA, thus increasing their reactivity as acceptors for peptidyl transferase. This is Elongation factor P (efp) from Aquifex aeolicus (strain VF5).